Here is a 420-residue protein sequence, read N- to C-terminus: F420-non-reducing hydrogenase vhu subunit A (420 aa).

Ni(2+)-binding residues include cysteine 61 and cysteine 64.

Belongs to the [NiFe]/[NiFeSe] hydrogenase large subunit family. The F420-non-reducing hydrogenase vhu is composed of four subunits; VhuA, VhuD, VhuG and VhuU. Ni(2+) is required as a cofactor.

The sequence is that of F420-non-reducing hydrogenase vhu subunit A (vhuA) from Methanococcus voltae.